Here is a 306-residue protein sequence, read N- to C-terminus: Ribosomal RNA small subunit methyltransferase H (306 aa).

Residues 33-35, Asp51, Phe82, Asp96, and Gln103 contribute to the S-adenosyl-L-methionine site; that span reads GGY.

The protein belongs to the methyltransferase superfamily. RsmH family.

The protein localises to the cytoplasm. The enzyme catalyses cytidine(1402) in 16S rRNA + S-adenosyl-L-methionine = N(4)-methylcytidine(1402) in 16S rRNA + S-adenosyl-L-homocysteine + H(+). In terms of biological role, specifically methylates the N4 position of cytidine in position 1402 (C1402) of 16S rRNA. In Rickettsia akari (strain Hartford), this protein is Ribosomal RNA small subunit methyltransferase H.